We begin with the raw amino-acid sequence, 264 residues long: MKAYLDLMRHVLDNGTDKSDRTGTGTRSVFGYQMRFDLGKGFPLLTTKKLHLRSIIHELLWFLKGDTNIKYLKDNNVSIWDEWADENGDLGPVYGYQWRNWPAPDGRHIDQIANVLEQIKKNPDSRRLIVSAWNPALVDEMALPPCHALFQFYVADGKLSCQLYQRSADIFLGVPFNIASYALLTMMMAQVCGLEAGEFVHTFGDAHLYRNHFEQAALQLEREPRALPVMKINPEVKDLFSFKFEDFELEGYDPHPHIKAAVSV.

Position 21 (arginine 21) interacts with dUMP. Histidine 51 is a (6R)-5,10-methylene-5,6,7,8-tetrahydrofolate binding site. 126-127 provides a ligand contact to dUMP; that stretch reads RR. Cysteine 146 (nucleophile) is an active-site residue. DUMP contacts are provided by residues 166-169, asparagine 177, and 207-209; these read RSAD and HLY. Aspartate 169 is a (6R)-5,10-methylene-5,6,7,8-tetrahydrofolate binding site. Residue serine 263 participates in (6R)-5,10-methylene-5,6,7,8-tetrahydrofolate binding.

The protein belongs to the thymidylate synthase family. Bacterial-type ThyA subfamily. In terms of assembly, homodimer.

The protein localises to the cytoplasm. The catalysed reaction is dUMP + (6R)-5,10-methylene-5,6,7,8-tetrahydrofolate = 7,8-dihydrofolate + dTMP. It participates in pyrimidine metabolism; dTTP biosynthesis. Functionally, catalyzes the reductive methylation of 2'-deoxyuridine-5'-monophosphate (dUMP) to 2'-deoxythymidine-5'-monophosphate (dTMP) while utilizing 5,10-methylenetetrahydrofolate (mTHF) as the methyl donor and reductant in the reaction, yielding dihydrofolate (DHF) as a by-product. This enzymatic reaction provides an intracellular de novo source of dTMP, an essential precursor for DNA biosynthesis. This chain is Thymidylate synthase, found in Neisseria meningitidis serogroup B (strain ATCC BAA-335 / MC58).